The chain runs to 138 residues: Ribosome-binding factor A (138 aa).

Residues Val-116–Glu-138 form a disordered region.

The protein belongs to the RbfA family. In terms of assembly, monomer. Binds 30S ribosomal subunits, but not 50S ribosomal subunits or 70S ribosomes.

It is found in the cytoplasm. Its function is as follows. One of several proteins that assist in the late maturation steps of the functional core of the 30S ribosomal subunit. Associates with free 30S ribosomal subunits (but not with 30S subunits that are part of 70S ribosomes or polysomes). Required for efficient processing of 16S rRNA. May interact with the 5'-terminal helix region of 16S rRNA. This is Ribosome-binding factor A from Pseudomonas syringae pv. tomato (strain ATCC BAA-871 / DC3000).